The sequence spans 203 residues: NADH-quinone oxidoreductase subunit C (203 aa).

It belongs to the complex I 30 kDa subunit family. As to quaternary structure, NDH-1 is composed of 14 different subunits. Subunits NuoB, C, D, E, F, and G constitute the peripheral sector of the complex.

It is found in the cell inner membrane. It carries out the reaction a quinone + NADH + 5 H(+)(in) = a quinol + NAD(+) + 4 H(+)(out). Its function is as follows. NDH-1 shuttles electrons from NADH, via FMN and iron-sulfur (Fe-S) centers, to quinones in the respiratory chain. The immediate electron acceptor for the enzyme in this species is believed to be ubiquinone. Couples the redox reaction to proton translocation (for every two electrons transferred, four hydrogen ions are translocated across the cytoplasmic membrane), and thus conserves the redox energy in a proton gradient. This is NADH-quinone oxidoreductase subunit C from Verminephrobacter eiseniae (strain EF01-2).